The following is a 329-amino-acid chain: Porphobilinogen deaminase (329 aa).

The residue at position 250 (C250) is an S-(dipyrrolylmethanemethyl)cysteine.

Belongs to the HMBS family. As to quaternary structure, monomer. Requires dipyrromethane as cofactor.

The enzyme catalyses 4 porphobilinogen + H2O = hydroxymethylbilane + 4 NH4(+). It functions in the pathway porphyrin-containing compound metabolism; protoporphyrin-IX biosynthesis; coproporphyrinogen-III from 5-aminolevulinate: step 2/4. Functionally, tetrapolymerization of the monopyrrole PBG into the hydroxymethylbilane pre-uroporphyrinogen in several discrete steps. The protein is Porphobilinogen deaminase of Burkholderia pseudomallei (strain 668).